The primary structure comprises 353 residues: MTDQPIFTGAAGAIIDLTIIGGGPTGIFAAFQCGMNNISCRVIESMPQLGGQLRALYPEKHIYDVAGFPEVPAASLVDSLWQQTERYSPEVVTGETVVSFRKLENGNFEVSTDAGSVFESRALLLAAGLGAFSPRKLPQLGDISDLEGSSVFYAVKAKSDFEGKRVVIVGGGDSALDWTVGLQGVASGITLVHRMHEFQGHGKTAREVDEARDAGTVDVHLNTEVASIERRGEGIASVQLRRKNASVCTVEADRLLLLIGFKSNLGPIANWGLELVDNAVVVDAHMKTSVDGLYAAGDIASYPGKLKIIQTGLSDAAMAVRHSLTYIKPGEKIRHSFSSVKMAKAKKKEEEHA.

Residues T25, E44, Q52, Y57, V97, F132, D298, and S339 each contribute to the FAD site.

The protein belongs to the ferredoxin--NADP reductase type 2 family. Homodimer. FAD serves as cofactor.

The catalysed reaction is 2 reduced [2Fe-2S]-[ferredoxin] + NADP(+) + H(+) = 2 oxidized [2Fe-2S]-[ferredoxin] + NADPH. This is Ferredoxin--NADP reductase from Chlorobium phaeovibrioides (strain DSM 265 / 1930) (Prosthecochloris vibrioformis (strain DSM 265)).